Consider the following 119-residue polypeptide: UPF0102 protein MS1289 (119 aa).

The protein belongs to the UPF0102 family.

This chain is UPF0102 protein MS1289, found in Mannheimia succiniciproducens (strain KCTC 0769BP / MBEL55E).